We begin with the raw amino-acid sequence, 429 residues long: GTPase Obg (429 aa).

The region spanning 1–158 is the Obg domain; it reads MFVDQVKIYV…RNVQLELKVL (158 aa). Residues 124–145 are disordered; it reads RGNKRFATPANPAPELSENGEP. Residues 159–329 form the OBG-type G domain; sequence ADVGLVGFPS…LLLAIADKLE (171 aa). GTP-binding positions include 165–172, 190–194, 212–215, 282–285, and 310–312; these read GFPSVGKS, FTTIV, DLPG, NKMD, and SAV. Mg(2+) is bound by residues Ser172 and Thr192. Residues 351-429 form the OCT domain; sequence KYVADEPDFE…LLDYEFEFMD (79 aa).

It belongs to the TRAFAC class OBG-HflX-like GTPase superfamily. OBG GTPase family. In terms of assembly, monomer. The cofactor is Mg(2+).

The protein localises to the cytoplasm. Functionally, an essential GTPase which binds GTP, GDP and possibly (p)ppGpp with moderate affinity, with high nucleotide exchange rates and a fairly low GTP hydrolysis rate. Plays a role in control of the cell cycle, stress response, ribosome biogenesis and in those bacteria that undergo differentiation, in morphogenesis control. The protein is GTPase Obg of Listeria monocytogenes serotype 4a (strain HCC23).